The following is a 587-amino-acid chain: Arginine--tRNA ligase (587 aa).

A 'HIGH' region motif is present at residues 123-133 (ANVAKPLHVGH).

Belongs to the class-I aminoacyl-tRNA synthetase family. As to quaternary structure, monomer.

It localises to the cytoplasm. It catalyses the reaction tRNA(Arg) + L-arginine + ATP = L-arginyl-tRNA(Arg) + AMP + diphosphate. This chain is Arginine--tRNA ligase, found in Alkaliphilus oremlandii (strain OhILAs) (Clostridium oremlandii (strain OhILAs)).